The following is a 662-amino-acid chain: MSQSVSLTFPDGSVRSYDAGATGRDVAESISKSLAKKAVAIAIDGTVRDLSEPVADGKIEIITRNDDRALELIRHDAAHVMAEAVQELWPGTQVTIGPVIENGFYYDFAKNEPFTPDDLPVIEKKMREIIQRNKPFTRQIWSREKAKQVFADKGERYKVELVDAIPEGQDLKIYYQGDWFDLCRGPHMASTGQIGTAFKLMKVAGAYWRGDSNNPMLTRIYGTAFAEQADLDNYLHILAEAEKRDHRRLGREMDLFHFQEEGPGVVFWHGKGWRIFQTLVSYMRRRLEGDYQEVNAPQVLDKSLWETSGHWGWYRDNMFKVTVAGDDTDDDRVFALKPMNCPGHIQIFKHGLKSYRELPIRLAEFGNVHRYEPSGALHGLMRVRGFTQDDAHIFCTDEQMAAECLKINDLILSVYEDFGFEEVVVKLSTRPEKRVGDDALWDRAESVMMEVLKTIEAQSGGRIKTGILPGEGAFYGPKFEYTLKDAIGREWQCGTTQVDFNLPERFGAFYIDQHSEKTQPVMIHRAICGSMERFLGILIENFAGHMPLWVSPLQVVVATITSEADGYGEEVAEALRDAGLTVETDFRNEKINYKIREHSVTKVPVIIVCGKKEAEERSVNIRRLGSQAQTAMSLDEAIASLSLEATPPDVLRKREAKRAKVA.

Positions 1 to 64 (MSQSVSLTFP…ADGKIEIITR (64 aa)) constitute a TGS domain. A catalytic region spans residues 245–547 (DHRRLGREMD…LIENFAGHMP (303 aa)). Residues Cys341, His392, and His524 each contribute to the Zn(2+) site.

This sequence belongs to the class-II aminoacyl-tRNA synthetase family. In terms of assembly, homodimer. It depends on Zn(2+) as a cofactor.

The protein resides in the cytoplasm. It catalyses the reaction tRNA(Thr) + L-threonine + ATP = L-threonyl-tRNA(Thr) + AMP + diphosphate + H(+). Functionally, catalyzes the attachment of threonine to tRNA(Thr) in a two-step reaction: L-threonine is first activated by ATP to form Thr-AMP and then transferred to the acceptor end of tRNA(Thr). Also edits incorrectly charged L-seryl-tRNA(Thr). The chain is Threonine--tRNA ligase from Rhizobium rhizogenes (strain K84 / ATCC BAA-868) (Agrobacterium radiobacter).